A 1185-amino-acid chain; its full sequence is MLELNNFDSIRIGLASPDKIRQWSSGEVKKPETINYRTLKPERDGLFCERIFGPTRDWECHCGKYKRVRYKGVVCDRCGVEVTRSKVRRERLGHIELAAPVSHIWYFKGIPSRMGLLLDMSPRALEKVLYFVSYIVIEPGDTPLLKKQLLTETEYREYRDKFGNNFKAGMGAEAIKVLLVEINLEELARELRQELKEVSGQRKIRAIRRLEVVEAFKKSGNRPEWMIMDVVPVIPPELRPMVQLDGGRFATSDLNDLYRRVINRNNRLKRLLDLGAPDIIVRNEKRMLQEAVDALIDNGRRGRPVTGPGNRPLKSLSDMLKGKQGRFRQNLLGKRVDYSGRSVIVVGPRLKMHQCGLPKEMALELFKPFVMKKLVNDGHAHNIKSAKRMVERVRPEVWDVLEDVIKEHPVMLNRAPTLHRLGIQAFEPVLVEGRAIKIHPMVCTAYNADFDGDQMAVHVPLSAEAQAEARLLMLAANNILNPKDGKPVASPTQDMVLGSYYLTMDRDGDLGEGLIFKDEQEAMLAYDNKQVSLQAKITVRRKNGERLQTTVGRIIFNEVIPEELGYINKVCDKKTLSKIVADCYRRLGNAHTAELLDGIKELGYKYSTRAGITIGVPDITIPEAKKEILAKAEEQVNKIETQFRRGLITEDERYRKVIGIWNDATDKVTKALMATLDKFNNVYMMATSGARGNIQQIRQLAGMRGLMADPSGRIIDLPIKANFREGLTVLEYFISTHGARKGLADTALRTADSGYLTRRLVDVAQDVIVREDDCGTTEGIEVREIRDGTEGIEKLHERLEGRVPMEVVVHPETGEVLISQEQVDNHQVMTEEQAQAIEDAGIEKVKIRSVITCKTRYGVCKHCYGKNLATGGNIDIGEAVGIIAAQSIGEPGTQLTMRTFHTGGVAGDDITQGLPRVEELFEARRPKGQAIVAEEDGSIAIREVKGRREIEITKDNGEKNVYAVPFGARIKVKEGQRIEAGDELTEGSVNPHDLLKIKGPAGVQVYLLQEVQRVYRLQGVEINDKHIEVMIRQMLRKVKIEEAGDTELLPGGLIDIFEFEEENRKAVEQGGEPAVAKPVLLGITKASLATDSFLSAASFQETTRVLTEAAIKGKMDPLLGLKENVIIGKLVPAGTGMSRYRNIEVLEEGQPFLEEDRDILLPERDRDYNFLSDEEKIDFDLTLEK.

Positions 60, 62, 75, and 78 each coordinate Zn(2+). The Mg(2+) site is built by Asp449, Asp451, and Asp453. Residues Cys774, Cys853, Cys860, and Cys863 each coordinate Zn(2+).

It belongs to the RNA polymerase beta' chain family. In terms of assembly, the RNAP catalytic core consists of 2 alpha, 1 beta, 1 beta' and 1 omega subunit. When a sigma factor is associated with the core the holoenzyme is formed, which can initiate transcription. It depends on Mg(2+) as a cofactor. Requires Zn(2+) as cofactor.

The enzyme catalyses RNA(n) + a ribonucleoside 5'-triphosphate = RNA(n+1) + diphosphate. Functionally, DNA-dependent RNA polymerase catalyzes the transcription of DNA into RNA using the four ribonucleoside triphosphates as substrates. The polypeptide is DNA-directed RNA polymerase subunit beta' (Desulforamulus reducens (strain ATCC BAA-1160 / DSM 100696 / MI-1) (Desulfotomaculum reducens)).